Reading from the N-terminus, the 615-residue chain is Proteasome-associated ATPase (615 aa).

Residues 1-27 (MSESERSEASEVFGTSPDSRLSSEDAA) are disordered. The stretch at 22–99 (SSEDAAELEQ…LREEVDRLGQ (78 aa)) forms a coiled coil. 302 to 307 (GCGKTL) is a binding site for ATP. The interval 614 to 615 (YL) is docks into pockets in the proteasome alpha-ring.

The protein belongs to the AAA ATPase family. Homohexamer. Assembles into a hexameric ring structure that caps the 20S proteasome core. Strongly interacts with the prokaryotic ubiquitin-like protein Pup through a hydrophobic interface; the interacting region of ARC lies in its N-terminal coiled-coil domain. There is one Pup binding site per ARC hexamer ring. Upon ATP-binding, the C-terminus of ARC interacts with the alpha-rings of the proteasome core, possibly by binding to the intersubunit pockets.

The protein operates within protein degradation; proteasomal Pup-dependent pathway. Its function is as follows. ATPase which is responsible for recognizing, binding, unfolding and translocation of pupylated proteins into the bacterial 20S proteasome core particle. May be essential for opening the gate of the 20S proteasome via an interaction with its C-terminus, thereby allowing substrate entry and access to the site of proteolysis. Thus, the C-termini of the proteasomal ATPase may function like a 'key in a lock' to induce gate opening and therefore regulate proteolysis. The sequence is that of Proteasome-associated ATPase from Mycolicibacterium vanbaalenii (strain DSM 7251 / JCM 13017 / BCRC 16820 / KCTC 9966 / NRRL B-24157 / PYR-1) (Mycobacterium vanbaalenii).